Here is a 445-residue protein sequence, read N- to C-terminus: Probable glycine dehydrogenase (decarboxylating) subunit 1 (445 aa).

Belongs to the GcvP family. N-terminal subunit subfamily. The glycine cleavage system is composed of four proteins: P, T, L and H. In this organism, the P 'protein' is a heterodimer of two subunits.

The enzyme catalyses N(6)-[(R)-lipoyl]-L-lysyl-[glycine-cleavage complex H protein] + glycine + H(+) = N(6)-[(R)-S(8)-aminomethyldihydrolipoyl]-L-lysyl-[glycine-cleavage complex H protein] + CO2. Its function is as follows. The glycine cleavage system catalyzes the degradation of glycine. The P protein binds the alpha-amino group of glycine through its pyridoxal phosphate cofactor; CO(2) is released and the remaining methylamine moiety is then transferred to the lipoamide cofactor of the H protein. In Anaeromyxobacter dehalogenans (strain 2CP-C), this protein is Probable glycine dehydrogenase (decarboxylating) subunit 1.